Here is a 346-residue protein sequence, read N- to C-terminus: Cyclin-dependent kinase 7 (346 aa).

N-acetylalanine is present on alanine 2. Serine 7 carries the phosphoserine modification. Positions 12–295 (YEKLDFLGEG…ATQALKMKYF (284 aa)) constitute a Protein kinase domain. ATP-binding positions include 18 to 26 (LGEGQFATV) and lysine 41. Aspartate 137 acts as the Proton acceptor in catalysis. Residue serine 164 is modified to Phosphoserine; by CDK1 and CDK2. Threonine 170 carries the post-translational modification Phosphothreonine; by CDK2. At serine 321 the chain carries Phosphoserine.

This sequence belongs to the protein kinase superfamily. CMGC Ser/Thr protein kinase family. CDC2/CDKX subfamily. In terms of assembly, associates primarily with cyclin-H (CCNH) and MAT1 to form the CAK complex. CAK can further associate with the core-TFIIH to form the TFIIH basal transcription factor; this complex is sensitive to UV light. The CAK complex binds to p53/TP53 in response to DNA damage. Interacts with CDK2, SF1/NR5A1, PUF60 and PRKCI. Interacts with HINT1. In terms of processing, phosphorylation of Ser-164 during mitosis inactivates the enzyme. Phosphorylation of Thr-170 is required for activity. Phosphorylated at Ser-164 and Thr-170 by CDK2. In terms of tissue distribution, ubiquitous.

The protein resides in the nucleus. Its subcellular location is the cytoplasm. It is found in the perinuclear region. The catalysed reaction is L-seryl-[protein] + ATP = O-phospho-L-seryl-[protein] + ADP + H(+). It carries out the reaction L-threonyl-[protein] + ATP = O-phospho-L-threonyl-[protein] + ADP + H(+). It catalyses the reaction [DNA-directed RNA polymerase] + ATP = phospho-[DNA-directed RNA polymerase] + ADP + H(+). With respect to regulation, inactivated by phosphorylation. Repressed by roscovitine (seliciclib, CYC202), R547 (Ro-4584820) and SNS-032 (BMS-387032). The association of p53/TP53 to the CAK complex in response to DNA damage reduces kinase activity toward CDK2 and RNA polymerase II repetitive C-terminal domain (CTD), thus stopping cell cycle progression. The inactivation by roscovitine promotes caspase-mediated apoptosis in leukemic cells. Specifically inactivated by THZ1. Serine/threonine kinase involved in cell cycle control and in RNA polymerase II-mediated RNA transcription. Cyclin-dependent kinases (CDKs) are activated by the binding to a cyclin and mediate the progression through the cell cycle. Each different complex controls a specific transition between 2 subsequent phases in the cell cycle. Required for both activation and complex formation of CDK1/cyclin-B during G2-M transition, and for activation of CDK2/cyclins during G1-S transition (but not complex formation). CDK7 is the catalytic subunit of the CDK-activating kinase (CAK) complex. Phosphorylates SPT5/SUPT5H, SF1/NR5A1, POLR2A, p53/TP53, CDK1, CDK2, CDK4, CDK6 and CDK11B/CDK11. Initiates transcription by RNA polymerase II by mediating phosphorylation of POLR2A at 'Ser-5' of the repetitive C-terminal domain (CTD) when POLR2A is in complex with DNA, promoting dissociation from DNA and initiation. CAK activates the cyclin-associated kinases CDK1, CDK2, CDK4 and CDK6 by threonine phosphorylation, thus regulating cell cycle progression. CAK complexed to the core-TFIIH basal transcription factor activates RNA polymerase II by serine phosphorylation of the CTD of POLR2A, allowing its escape from the promoter and elongation of the transcripts. Its expression and activity are constant throughout the cell cycle. Upon DNA damage, triggers p53/TP53 activation by phosphorylation, but is inactivated in turn by p53/TP53; this feedback loop may lead to an arrest of the cell cycle and of the transcription, helping in cell recovery, or to apoptosis. Required for DNA-bound peptides-mediated transcription and cellular growth inhibition. This chain is Cyclin-dependent kinase 7 (CDK7), found in Homo sapiens (Human).